The sequence spans 222 residues: Transmembrane reductase CYB561D2 (222 aa).

Residues 2 to 17 (ALSVETESHIYRALRT) are Cytoplasmic-facing. The Cytochrome b561 domain occupies 14-217 (ALRTVSGAAA…NQVSNAYLYR (204 aa)). The chain crosses the membrane as a helical span at residues 18–38 (VSGAAAHLVALGFTIFVAVLA). The Lumenal portion of the chain corresponds to 39-46 (RPGSSLFS). Residues 47-67 (WHPVLMSLAFSFLMTEALLVF) traverse the membrane as a helical segment. Residue histidine 48 coordinates heme b. Over 68–85 (SPESSLLRSLSRKGRARC) the chain is Cytoplasmic. Heme b-binding residues include histidine 86 and histidine 120. A helical transmembrane segment spans residues 86–106 (HWVLQLLALLCALLGLGLVIL). The Lumenal portion of the chain corresponds to 107–122 (HKEQLGKAHLATWHGR). Residues 123–143 (AGLLAVLWAGLQCSGGVGLLY) traverse the membrane as a helical segment. Residues 144-162 (PKLLPRWPLAKLKLYHATS) lie on the Cytoplasmic side of the membrane. Histidine 159 contributes to the heme b binding site. A helical membrane pass occupies residues 163 to 183 (GLVGYLLGGASLLLGMCSLWF). Residues 184–186 (TAT) lie on the Lumenal side of the membrane. Residues 187 to 207 (VTGGVWYLAVLCPVITSLVIM) form a helical membrane-spanning segment. Topologically, residues 208–222 (NQVSNAYLYRKRIQP) are cytoplasmic.

Heme b serves as cofactor.

It localises to the endoplasmic reticulum membrane. Its subcellular location is the cytoplasmic vesicle membrane. It carries out the reaction monodehydro-L-ascorbate radical(out) + L-ascorbate(in) = monodehydro-L-ascorbate radical(in) + L-ascorbate(out). The enzyme catalyses Fe(3+)(out) + L-ascorbate(in) = monodehydro-L-ascorbate radical(in) + Fe(2+)(out) + H(+). Transmembrane reductase that may use ascorbate as an electron donor in the cytoplasm and transfer electrons across endoplasmic reticulum membranes to reduce monodehydro-L-ascorbate radical and iron cations Fe(3+) in the lumen of that compartment. This Bos taurus (Bovine) protein is Transmembrane reductase CYB561D2.